Consider the following 818-residue polypeptide: Cytosolic phospholipase A2 delta (818 aa).

The 120-residue stretch at 5 to 124 folds into the C2 domain; it reads SPGGPPGHPY…LPGKLLRKTF (120 aa). Ca(2+) is bound by residues D38, D44, D94, D96, and D102. The PLA2c domain occupies 273-818; it reads GCPEELAVHL…LEARPPRAQT (546 aa). Substrate is bound at residue 330–331; that stretch reads GG. Catalysis depends on S361, which acts as the Nucleophile. D647 functions as the Proton acceptor in the catalytic mechanism.

Ca(2+) serves as cofactor. In terms of tissue distribution, expressed in stratified squamous epithelia, such as those in skin and cervix, but not in other tissues. Strongly expressed in the upper spinous layer of the psoriatic epidermis, expressed weakly and discontinuously in atopic dermatitis and mycosis fungoides, and not detected in the epidermis of normal skin.

The protein resides in the cytoplasm. It localises to the cytosol. The protein localises to the membrane. It catalyses the reaction a 1,2-diacyl-sn-glycero-3-phosphocholine + H2O = a 1-acyl-sn-glycero-3-phosphocholine + a fatty acid + H(+). The catalysed reaction is 1-hexadecanoyl-2-(5Z,8Z,11Z,14Z-eicosatetraenoyl)-sn-glycero-3-phosphocholine + H2O = 1-hexadecanoyl-sn-glycero-3-phosphocholine + (5Z,8Z,11Z,14Z)-eicosatetraenoate + H(+). It carries out the reaction 1-hexadecanoyl-2-(9Z,12Z-octadecadienoyl)-sn-glycero-3-phosphocholine + H2O = (9Z,12Z)-octadecadienoate + 1-hexadecanoyl-sn-glycero-3-phosphocholine + H(+). The enzyme catalyses 1-hexadecanoyl-2-(9Z-octadecenoyl)-sn-glycero-3-phosphocholine + H2O = 1-hexadecanoyl-sn-glycero-3-phosphocholine + (9Z)-octadecenoate + H(+). It catalyses the reaction 1-hexadecanoyl-2-(5Z,8Z,11Z,14Z-eicosatetraenoyl)-sn-glycero-3-phosphoethanolamine + H2O = 1-hexadecanoyl-sn-glycero-3-phosphoethanolamine + (5Z,8Z,11Z,14Z)-eicosatetraenoate + H(+). The catalysed reaction is 1-hexadecanoyl-2-(9Z,12Z-octadecadienoyl)-sn-glycero-3-phosphoethanolamine + H2O = 1-hexadecanoyl-sn-glycero-3-phosphoethanolamine + (9Z,12Z)-octadecadienoate + H(+). It participates in lipid metabolism; fatty acid metabolism. With respect to regulation, stimulated by cytosolic Ca(2+). In terms of biological role, calcium-dependent phospholipase A2 that selectively hydrolyzes glycerophospholipids in the sn-2 position. Has a preference for linoleic acid at the sn-2 position. The chain is Cytosolic phospholipase A2 delta from Homo sapiens (Human).